Reading from the N-terminus, the 475-residue chain is Aspartyl/glutamyl-tRNA(Asn/Gln) amidotransferase subunit B (475 aa).

Belongs to the GatB/GatE family. GatB subfamily. In terms of assembly, heterotrimer of A, B and C subunits.

It catalyses the reaction L-glutamyl-tRNA(Gln) + L-glutamine + ATP + H2O = L-glutaminyl-tRNA(Gln) + L-glutamate + ADP + phosphate + H(+). The catalysed reaction is L-aspartyl-tRNA(Asn) + L-glutamine + ATP + H2O = L-asparaginyl-tRNA(Asn) + L-glutamate + ADP + phosphate + 2 H(+). Its function is as follows. Allows the formation of correctly charged Asn-tRNA(Asn) or Gln-tRNA(Gln) through the transamidation of misacylated Asp-tRNA(Asn) or Glu-tRNA(Gln) in organisms which lack either or both of asparaginyl-tRNA or glutaminyl-tRNA synthetases. The reaction takes place in the presence of glutamine and ATP through an activated phospho-Asp-tRNA(Asn) or phospho-Glu-tRNA(Gln). The sequence is that of Aspartyl/glutamyl-tRNA(Asn/Gln) amidotransferase subunit B from Staphylococcus aureus (strain bovine RF122 / ET3-1).